Reading from the N-terminus, the 1072-residue chain is Carbamoyl phosphate synthase large chain (1072 aa).

The tract at residues 1–401 is carboxyphosphate synthetic domain; sequence MPKRLDINTI…SLLKAVRSLE (401 aa). ATP contacts are provided by arginine 129, arginine 169, glycine 175, glycine 176, lysine 208, isoleucine 210, glutamate 215, glycine 241, valine 242, histidine 243, glutamine 284, and glutamate 298. The region spanning 133–327 is the ATP-grasp 1 domain; the sequence is RTLMQELNEP…IAKLAAKIAV (195 aa). 3 residues coordinate Mg(2+): glutamine 284, glutamate 298, and asparagine 300. Positions 284, 298, and 300 each coordinate Mn(2+). The interval 402–546 is oligomerization domain; sequence LGIYHLELDH…YSTYADENES (145 aa). The carbamoyl phosphate synthetic domain stretch occupies residues 547–929; sequence IVTDRKSVVV…ALYKGLVASG (383 aa). The ATP-grasp 2 domain occupies 671–861; the sequence is EAALTKLGIP…MANVATKVIL (191 aa). Arginine 707, arginine 746, glutamate 752, glycine 777, valine 778, histidine 779, serine 780, glutamine 820, and glutamate 832 together coordinate ATP. 3 residues coordinate Mg(2+): glutamine 820, glutamate 832, and asparagine 834. 3 residues coordinate Mn(2+): glutamine 820, glutamate 832, and asparagine 834. Residues 930–1072 enclose the MGS-like domain; it reads INIPTHGSVI…QTKRHEVVHA (143 aa). The interval 930-1072 is allosteric domain; that stretch reads INIPTHGSVI…QTKRHEVVHA (143 aa).

It belongs to the CarB family. In terms of assembly, composed of two chains; the small (or glutamine) chain promotes the hydrolysis of glutamine to ammonia, which is used by the large (or ammonia) chain to synthesize carbamoyl phosphate. Tetramer of heterodimers (alpha,beta)4. The cofactor is Mg(2+). Requires Mn(2+) as cofactor.

It carries out the reaction hydrogencarbonate + L-glutamine + 2 ATP + H2O = carbamoyl phosphate + L-glutamate + 2 ADP + phosphate + 2 H(+). The catalysed reaction is hydrogencarbonate + NH4(+) + 2 ATP = carbamoyl phosphate + 2 ADP + phosphate + 2 H(+). Its pathway is amino-acid biosynthesis; L-arginine biosynthesis; carbamoyl phosphate from bicarbonate: step 1/1. It functions in the pathway pyrimidine metabolism; UMP biosynthesis via de novo pathway; (S)-dihydroorotate from bicarbonate: step 1/3. Large subunit of the glutamine-dependent carbamoyl phosphate synthetase (CPSase). CPSase catalyzes the formation of carbamoyl phosphate from the ammonia moiety of glutamine, carbonate, and phosphate donated by ATP, constituting the first step of 2 biosynthetic pathways, one leading to arginine and/or urea and the other to pyrimidine nucleotides. The large subunit (synthetase) binds the substrates ammonia (free or transferred from glutamine from the small subunit), hydrogencarbonate and ATP and carries out an ATP-coupled ligase reaction, activating hydrogencarbonate by forming carboxy phosphate which reacts with ammonia to form carbamoyl phosphate. The chain is Carbamoyl phosphate synthase large chain from Bacillus thuringiensis subsp. konkukian (strain 97-27).